We begin with the raw amino-acid sequence, 428 residues long: 5'-nucleotidase domain-containing protein 4 (428 aa).

Asp-22 functions as the Nucleophile in the catalytic mechanism. Mg(2+)-binding residues include Asp-22, Asp-24, and Asp-317. Asp-24 functions as the Proton donor in the catalytic mechanism.

The protein belongs to the 5'(3')-deoxyribonucleotidase family.

This chain is 5'-nucleotidase domain-containing protein 4 (NT5DC4), found in Homo sapiens (Human).